Here is a 382-residue protein sequence, read N- to C-terminus: D-galactonate dehydratase (382 aa).

Asp183 contributes to the Mg(2+) binding site. His185 (proton donor) is an active-site residue. 2 residues coordinate Mg(2+): Glu209 and Glu235. Residue His285 is the Proton acceptor of the active site.

This sequence belongs to the mandelate racemase/muconate lactonizing enzyme family. GalD subfamily. Mg(2+) serves as cofactor.

The catalysed reaction is D-galactonate = 2-dehydro-3-deoxy-D-galactonate + H2O. Its pathway is carbohydrate acid metabolism; D-galactonate degradation; D-glyceraldehyde 3-phosphate and pyruvate from D-galactonate: step 1/3. Catalyzes the dehydration of D-galactonate to 2-keto-3-deoxy-D-galactonate. This Klebsiella pneumoniae (strain 342) protein is D-galactonate dehydratase.